A 379-amino-acid polypeptide reads, in one-letter code: Presenilin-associated rhomboid-like protein, mitochondrial (379 aa).

The transit peptide at 1–52 directs the protein to the mitochondrion; it reads MAWRGWAQRGWGCGQAWAASVGGRSCEELTAALTPPRLLGRRFNFFIQQKCG. The Mitochondrial matrix segment spans residues 53-101; that stretch reads FRKAPRKVEPRRSDTGTSGEAYKRSALIPPVEETVFYPSPYPIRSLIKP. Residue serine 65 is modified to Phosphoserine. Residue threonine 69 is modified to Phosphothreonine. A Phosphoserine modification is found at serine 70. Residues 102-121 traverse the membrane as a helical segment; that stretch reads LFFTVGFTGCAFGSAAIWQY. Over 122–167 the chain is Mitochondrial intermembrane; that stretch reads ESLKSRVQSYFDGIKADWLDSIRPQKEGDFRKEINKWWNNLSDGQR. A helical transmembrane segment spans residues 168–187; it reads TVTGIIAANVLVFCLWRVPS. Topologically, residues 188-207 are mitochondrial matrix; the sequence is LQRTMIRYFTSNPASKVLCS. Residues 208 to 230 traverse the membrane as a helical segment; the sequence is PMLLSTFSHFSLFHMAANMYVLW. The Mitochondrial intermembrane portion of the chain corresponds to 231–244; the sequence is SFSSSIVNILGQEQ. A helical transmembrane segment spans residues 245-262; that stretch reads FMAVYLSAGVISNFVSYV. At 263-273 the chain is on the mitochondrial matrix side; it reads GKVATGRYGPS. A helical transmembrane segment spans residues 274–292; sequence LGASGAIMTVLAAVCTKIP. Serine 277 functions as the Nucleophile in the catalytic mechanism. Topologically, residues 293–295 are mitochondrial intermembrane; the sequence is EGR. A helical transmembrane segment spans residues 296–318; that stretch reads LAIIFLPMFTFTAGNALKAIIAM. The Mitochondrial matrix segment spans residues 319–332; it reads DTAGMILGWKFFDH. The helical transmembrane segment at 333–354 threads the bilayer; the sequence is AAHLGGALFGIWYVTYGHELIW. The active site involves histidine 335. Topologically, residues 355–379 are mitochondrial intermembrane; it reads KNREPLVKIWHEIRTNGPKKGGGSK.

Belongs to the peptidase S54 family. In terms of assembly, interacts with PSEN1 and PSEN2. Binds OPA1. In terms of processing, P-beta is proteolytically processed (beta-cleavage) in a PARL-dependent manner.

It is found in the mitochondrion inner membrane. The protein localises to the nucleus. The catalysed reaction is Cleaves type-1 transmembrane domains using a catalytic dyad composed of serine and histidine that are contributed by different transmembrane domains.. Functionally, required for the control of apoptosis during postnatal growth. Essential for proteolytic processing of an antiapoptotic form of OPA1 which prevents the release of mitochondrial cytochrome c in response to intrinsic apoptotic signals. Required for the maturation of PINK1 into its 52kDa mature form after its cleavage by mitochondrial-processing peptidase (MPP). Promotes cleavage of serine/threonine-protein phosphatase PGAM5 in damaged mitochondria in response to loss of mitochondrial membrane potential. Mediates differential cleavage of PINK1 and PGAM5 depending on the health status of mitochondria, disassociating from PINK1 and associating with PGAM5 in response to mitochondrial membrane potential loss. Required for processing of CLPB into a form with higher protein disaggregase activity by removing an autoinhibitory N-terminal peptide. Promotes processing of DIABLO/SMAC in the mitochondrion which is required for DIABLO apoptotic activity. Also required for cleavage of STARD7 and TTC19. Promotes changes in mitochondria morphology regulated by phosphorylation of P-beta domain. The chain is Presenilin-associated rhomboid-like protein, mitochondrial (PARL) from Pongo abelii (Sumatran orangutan).